We begin with the raw amino-acid sequence, 464 residues long: Soluble pyridine nucleotide transhydrogenase (464 aa).

35–44 (DNRPLVGGNC) is an FAD binding site.

Belongs to the class-I pyridine nucleotide-disulfide oxidoreductase family. It depends on FAD as a cofactor.

The protein localises to the cytoplasm. The catalysed reaction is NAD(+) + NADPH = NADH + NADP(+). In terms of biological role, conversion of NADPH, generated by peripheral catabolic pathways, to NADH, which can enter the respiratory chain for energy generation. This is Soluble pyridine nucleotide transhydrogenase from Ectopseudomonas mendocina (strain ymp) (Pseudomonas mendocina).